Here is a 219-residue protein sequence, read N- to C-terminus: METVLNSCEIRVLGCLVEKELATPEYYPLTLNALTAACNQKSNRDPVMALEDADVVRALDSLRMKGFARQSAEGVRAMKYCHCLAEKFLLEPPDLAVLAELLVRGPQTVGELRTRAERMRPFADLAAVEEVLRMLMEREEPLVTRLPRQPGRKEQRYAHLLAGAPEAEGEESMAPPEGARLQVRAENERVARLEEEVTALRAEVAELRRMMEEFRSQFE.

Belongs to the UPF0502 family.

The protein is UPF0502 protein Gmet_0262 of Geobacter metallireducens (strain ATCC 53774 / DSM 7210 / GS-15).